The primary structure comprises 156 residues: ATP synthase subunit b (156 aa).

A helical membrane pass occupies residues 12 to 32; that stretch reads VAFLIFVLFCMKYVWPPVITA.

Belongs to the ATPase B chain family. As to quaternary structure, F-type ATPases have 2 components, F(1) - the catalytic core - and F(0) - the membrane proton channel. F(1) has five subunits: alpha(3), beta(3), gamma(1), delta(1), epsilon(1). F(0) has three main subunits: a(1), b(2) and c(10-14). The alpha and beta chains form an alternating ring which encloses part of the gamma chain. F(1) is attached to F(0) by a central stalk formed by the gamma and epsilon chains, while a peripheral stalk is formed by the delta and b chains.

Its subcellular location is the cell inner membrane. F(1)F(0) ATP synthase produces ATP from ADP in the presence of a proton or sodium gradient. F-type ATPases consist of two structural domains, F(1) containing the extramembraneous catalytic core and F(0) containing the membrane proton channel, linked together by a central stalk and a peripheral stalk. During catalysis, ATP synthesis in the catalytic domain of F(1) is coupled via a rotary mechanism of the central stalk subunits to proton translocation. Functionally, component of the F(0) channel, it forms part of the peripheral stalk, linking F(1) to F(0). This Pseudomonas putida (strain GB-1) protein is ATP synthase subunit b.